Here is a 201-residue protein sequence, read N- to C-terminus: 3-isopropylmalate dehydratase small subunit (201 aa).

This sequence belongs to the LeuD family. LeuD type 1 subfamily. In terms of assembly, heterodimer of LeuC and LeuD.

It carries out the reaction (2R,3S)-3-isopropylmalate = (2S)-2-isopropylmalate. The protein operates within amino-acid biosynthesis; L-leucine biosynthesis; L-leucine from 3-methyl-2-oxobutanoate: step 2/4. In terms of biological role, catalyzes the isomerization between 2-isopropylmalate and 3-isopropylmalate, via the formation of 2-isopropylmaleate. This is 3-isopropylmalate dehydratase small subunit from Shewanella oneidensis (strain ATCC 700550 / JCM 31522 / CIP 106686 / LMG 19005 / NCIMB 14063 / MR-1).